Here is a 40-residue protein sequence, read N- to C-terminus: Sapecin-C (40 aa).

3 disulfides stabilise this stretch: cysteine 3–cysteine 30, cysteine 16–cysteine 36, and cysteine 20–cysteine 38.

The protein belongs to the invertebrate defensin family. Type 1 subfamily. As to expression, hemocytes and fat body.

It is found in the secreted. Sapecins, which are potent bactericidal proteins, are produced in response to injury. Sapecin C is cytotoxic to Gram-positive bacteria. This chain is Sapecin-C, found in Sarcophaga peregrina (Flesh fly).